A 267-amino-acid polypeptide reads, in one-letter code: Putative phosphatase bbp_030 (267 aa).

Asp8 (nucleophile) is an active-site residue. Asp8 contributes to the Mg(2+) binding site. Leu9 contributes to the phosphate binding site. Asp10 contributes to the Mg(2+) binding site. Phosphate is bound by residues 42–43 and Lys191; that span reads TG. Asp214 provides a ligand contact to Mg(2+). Residue Asn217 coordinates phosphate.

The protein belongs to the HAD-like hydrolase superfamily. Cof family. Mg(2+) is required as a cofactor.

The chain is Putative phosphatase bbp_030 from Buchnera aphidicola subsp. Baizongia pistaciae (strain Bp).